Consider the following 426-residue polypeptide: Histidine--tRNA ligase (426 aa).

Belongs to the class-II aminoacyl-tRNA synthetase family. Homodimer.

It is found in the cytoplasm. It catalyses the reaction tRNA(His) + L-histidine + ATP = L-histidyl-tRNA(His) + AMP + diphosphate + H(+). The chain is Histidine--tRNA ligase from Streptococcus thermophilus (strain CNRZ 1066).